The chain runs to 165 residues: MAKEYSFDISAKIDMQSFKNAINLVDKEVANRYDFKGTTYEVDYKEKDKLLVMVASSDNKLDALKDIVITKLLKQNLSSKVLEEQKTENSSGNNRKVTFKIVDYIESKEAKKIAAEIKNLKLKVTAQIEGDSIRVKGAKLDDLQKVIATIRSMEWEAPLVFENMR.

This sequence belongs to the YajQ family.

In terms of biological role, nucleotide-binding protein. The sequence is that of Nucleotide-binding protein Suden_0039 from Sulfurimonas denitrificans (strain ATCC 33889 / DSM 1251) (Thiomicrospira denitrificans (strain ATCC 33889 / DSM 1251)).